We begin with the raw amino-acid sequence, 228 residues long: Ribose-5-phosphate isomerase A (228 aa).

Residues 29–32 (TGST), 85–88 (DGAD), and 98–101 (KGGG) contribute to the substrate site. The active-site Proton acceptor is the glutamate 107. Lysine 125 provides a ligand contact to substrate.

Belongs to the ribose 5-phosphate isomerase family. In terms of assembly, homodimer.

It catalyses the reaction aldehydo-D-ribose 5-phosphate = D-ribulose 5-phosphate. The protein operates within carbohydrate degradation; pentose phosphate pathway; D-ribose 5-phosphate from D-ribulose 5-phosphate (non-oxidative stage): step 1/1. Its function is as follows. Catalyzes the reversible conversion of ribose-5-phosphate to ribulose 5-phosphate. The protein is Ribose-5-phosphate isomerase A of Staphylococcus aureus (strain COL).